A 163-amino-acid chain; its full sequence is Large ribosomal subunit protein uL10 (163 aa).

The protein belongs to the universal ribosomal protein uL10 family. Part of the ribosomal stalk of the 50S ribosomal subunit. The N-terminus interacts with L11 and the large rRNA to form the base of the stalk. The C-terminus forms an elongated spine to which L12 dimers bind in a sequential fashion forming a multimeric L10(L12)X complex.

Its function is as follows. Forms part of the ribosomal stalk, playing a central role in the interaction of the ribosome with GTP-bound translation factors. This is Large ribosomal subunit protein uL10 from Haemophilus influenzae (strain PittGG).